The primary structure comprises 338 residues: MSVSGLPFDDFRTLLRDLPGPDARALVAARERDAQLTKPPGALGRLEEIAFWLAAWTGRTPAVNRPLVAIFAGNHGVTKQGITPFPPTVTQQMVENFAAGGAAINQICVAYDLGLKVFDLALDYPTGDITEEAALSERDCAATMAFGMEAIAGGTDLLCIGEMGIGNTTIAAAINYALYGGSARDWVGPGTGSEGEMLERKIAAVEKAVALHGDHLDDPLEIMRRLGGREIAAMAGAILAARMERIPVLIDGYVATAAAAILKAANPSALDHCLIGHVSGEPGHLRAIEMLGKTPLLALGMRLGEGTGAALAAGIVKAAAACHSGMATFAQAGVSNKH.

Residue Glu305 is the Proton acceptor of the active site.

This sequence belongs to the CobT family.

It catalyses the reaction 5,6-dimethylbenzimidazole + nicotinate beta-D-ribonucleotide = alpha-ribazole 5'-phosphate + nicotinate + H(+). The protein operates within nucleoside biosynthesis; alpha-ribazole biosynthesis; alpha-ribazole from 5,6-dimethylbenzimidazole: step 1/2. Its function is as follows. Catalyzes the synthesis of alpha-ribazole-5'-phosphate from nicotinate mononucleotide (NAMN) and 5,6-dimethylbenzimidazole (DMB). The protein is Nicotinate-nucleotide--dimethylbenzimidazole phosphoribosyltransferase of Rhizobium johnstonii (strain DSM 114642 / LMG 32736 / 3841) (Rhizobium leguminosarum bv. viciae).